The primary structure comprises 118 residues: uncharacterized protein (118 aa).

The helical transmembrane segment at isoleucine 95 to leucine 115 threads the bilayer.

This sequence belongs to the M.jannaschii MJ0023/MJ0349/MJ1072/MJ1074/MJ1107/MJECL16 family.

It is found in the membrane. This is an uncharacterized protein from Methanocaldococcus jannaschii (strain ATCC 43067 / DSM 2661 / JAL-1 / JCM 10045 / NBRC 100440) (Methanococcus jannaschii).